The chain runs to 1059 residues: Carbamoyl phosphate synthase large chain (1059 aa).

Residues 1-401 (MPKRKDIQKI…SLLKACRSLE (401 aa)) are carboxyphosphate synthetic domain. R129, R169, G175, G176, R208, I210, E215, G241, I242, H243, Q284, and E298 together coordinate ATP. The ATP-grasp 1 domain occupies 133–327 (KQLMEELGQP…IAKLAAKIAV (195 aa)). Mg(2+) is bound by residues Q284, E298, and N300. Mn(2+) is bound by residues Q284, E298, and N300. An oligomerization domain region spans residues 402–546 (VGVDHNELPA…YSTYGFENES (145 aa)). A carbamoyl phosphate synthetic domain region spans residues 547–929 (VKSSKESVLV…ALYKAFEASY (383 aa)). The 191-residue stretch at 671-861 (EQALKELDIP…MAQVATRLIL (191 aa)) folds into the ATP-grasp 2 domain. Residues R707, S746, I748, E752, G777, V778, H779, S780, Q820, and E832 each contribute to the ATP site. Residues Q820, E832, and N834 each contribute to the Mg(2+) site. Mn(2+)-binding residues include Q820, E832, and N834. The MGS-like domain occupies 930-1059 (LHLPNFGNVV…ESRSFTTEAI (130 aa)). The interval 930 to 1059 (LHLPNFGNVV…ESRSFTTEAI (130 aa)) is allosteric domain.

This sequence belongs to the CarB family. In terms of assembly, composed of two chains; the small (or glutamine) chain promotes the hydrolysis of glutamine to ammonia, which is used by the large (or ammonia) chain to synthesize carbamoyl phosphate. Tetramer of heterodimers (alpha,beta)4. The cofactor is Mg(2+). Mn(2+) serves as cofactor.

It catalyses the reaction hydrogencarbonate + L-glutamine + 2 ATP + H2O = carbamoyl phosphate + L-glutamate + 2 ADP + phosphate + 2 H(+). The catalysed reaction is hydrogencarbonate + NH4(+) + 2 ATP = carbamoyl phosphate + 2 ADP + phosphate + 2 H(+). The protein operates within amino-acid biosynthesis; L-arginine biosynthesis; carbamoyl phosphate from bicarbonate: step 1/1. It functions in the pathway pyrimidine metabolism; UMP biosynthesis via de novo pathway; (S)-dihydroorotate from bicarbonate: step 1/3. Its function is as follows. Large subunit of the glutamine-dependent carbamoyl phosphate synthetase (CPSase). CPSase catalyzes the formation of carbamoyl phosphate from the ammonia moiety of glutamine, carbonate, and phosphate donated by ATP, constituting the first step of 2 biosynthetic pathways, one leading to arginine and/or urea and the other to pyrimidine nucleotides. The large subunit (synthetase) binds the substrates ammonia (free or transferred from glutamine from the small subunit), hydrogencarbonate and ATP and carries out an ATP-coupled ligase reaction, activating hydrogencarbonate by forming carboxy phosphate which reacts with ammonia to form carbamoyl phosphate. The polypeptide is Carbamoyl phosphate synthase large chain (Streptococcus gordonii (strain Challis / ATCC 35105 / BCRC 15272 / CH1 / DL1 / V288)).